The sequence spans 475 residues: MNTALAQQIANEGGVEAWMIAQQHKSLLRFLTCGSVDDGKSTLIGRLLHDTRQIYEDQLSSLHNDSKRHGTQGEKLDLALLVDGLQAEREQGITIDVAYRYFSTEKRKFIIADTPGHEQYTRNMATGASTCELAILLIDARKGVLDQTRRHSFISTLLGIKHLVVAINKMDLVGYSEETFTRIREDYLTFAGQLPGNLDIRFVPLSALEGDNVASQSESMPWYSGPTLLEVLETVEIQRVVDAQPMRFPVQYVNRPNLDFRGYAGTLASGRVEVGQRVKVLPSGVESNVARIVTFDGDREEAFAGEAITLVLTDEIDISRGDLLLAADEALPAVQSASVDVVWMAEQPLSAGQSYDIKIAGKKTRARVDGIRYQVDINNLTQREVENLPLNGIGLVDLTFDEPLVLDRYQQNPVTGGLIFIDRLSNVTVGAGMVHEPVSQATAAPSEFSAFELELNALVRRHFPHWGARDLLGDK.

The 215-residue stretch at 25 to 239 (KSLLRFLTCG…EVLETVEIQR (215 aa)) folds into the tr-type G domain. A G1 region spans residues 34-41 (GSVDDGKS). 34–41 (GSVDDGKS) provides a ligand contact to GTP. A G2 region spans residues 92–96 (GITID). Residues 113-116 (DTPG) form a G3 region. Residues 113–117 (DTPGH) and 168–171 (NKMD) contribute to the GTP site. Residues 168–171 (NKMD) are G4. Residues 206–208 (SAL) form a G5 region.

Belongs to the TRAFAC class translation factor GTPase superfamily. Classic translation factor GTPase family. CysN/NodQ subfamily. Heterodimer composed of CysD, the smaller subunit, and CysN.

The enzyme catalyses sulfate + ATP + H(+) = adenosine 5'-phosphosulfate + diphosphate. The protein operates within sulfur metabolism; hydrogen sulfide biosynthesis; sulfite from sulfate: step 1/3. In terms of biological role, with CysD forms the ATP sulfurylase (ATPS) that catalyzes the adenylation of sulfate producing adenosine 5'-phosphosulfate (APS) and diphosphate, the first enzymatic step in sulfur assimilation pathway. APS synthesis involves the formation of a high-energy phosphoric-sulfuric acid anhydride bond driven by GTP hydrolysis by CysN coupled to ATP hydrolysis by CysD. This Escherichia coli O17:K52:H18 (strain UMN026 / ExPEC) protein is Sulfate adenylyltransferase subunit 1.